Consider the following 112-residue polypeptide: UPF0145 protein MmarC6_1828 (112 aa).

This sequence belongs to the UPF0145 family.

The chain is UPF0145 protein MmarC6_1828 from Methanococcus maripaludis (strain C6 / ATCC BAA-1332).